A 433-amino-acid polypeptide reads, in one-letter code: Tol-Pal system protein TolB (433 aa).

An N-terminal signal peptide occupies residues 1–21 (MINLFRGLLVVLCFASAMVSA).

It belongs to the TolB family. In terms of assembly, the Tol-Pal system is composed of five core proteins: the inner membrane proteins TolA, TolQ and TolR, the periplasmic protein TolB and the outer membrane protein Pal. They form a network linking the inner and outer membranes and the peptidoglycan layer.

The protein localises to the periplasm. Functionally, part of the Tol-Pal system, which plays a role in outer membrane invagination during cell division and is important for maintaining outer membrane integrity. In Pseudomonas syringae pv. syringae (strain B728a), this protein is Tol-Pal system protein TolB.